A 128-amino-acid chain; its full sequence is Large ribosomal subunit protein mL55 (128 aa).

The N-terminal 33 residues, 1–33 (MAAVGSLLGRLRQSTVKATGPALRRLHTSSWRA), are a transit peptide targeting the mitochondrion. Position 85 is a phosphoserine (Ser85).

Belongs to the mitochondrion-specific ribosomal protein mL55 family. In terms of assembly, component of the mitochondrial large ribosomal subunit (mt-LSU). Mature mammalian 55S mitochondrial ribosomes consist of a small (28S) and a large (39S) subunit. The 28S small subunit contains a 12S ribosomal RNA (12S mt-rRNA) and 30 different proteins. The 39S large subunit contains a 16S rRNA (16S mt-rRNA), a copy of mitochondrial valine transfer RNA (mt-tRNA(Val)), which plays an integral structural role, and 52 different proteins.

It is found in the mitochondrion. This chain is Large ribosomal subunit protein mL55 (MRPL55), found in Homo sapiens (Human).